Reading from the N-terminus, the 428-residue chain is Dihydroorotase (428 aa).

Residues His59 and His61 each contribute to the Zn(2+) site. Residues 61–63 (HLR) and Asn93 contribute to the substrate site. Zn(2+)-binding residues include Asp151, His178, and His231. Substrate is bound at residue Asn277. Asp304 serves as a coordination point for Zn(2+). Asp304 is an active-site residue. Residues His308 and 322-323 (FG) each bind substrate.

It belongs to the metallo-dependent hydrolases superfamily. DHOase family. Class I DHOase subfamily. The cofactor is Zn(2+).

The catalysed reaction is (S)-dihydroorotate + H2O = N-carbamoyl-L-aspartate + H(+). It functions in the pathway pyrimidine metabolism; UMP biosynthesis via de novo pathway; (S)-dihydroorotate from bicarbonate: step 3/3. Its function is as follows. Catalyzes the reversible cyclization of carbamoyl aspartate to dihydroorotate. This chain is Dihydroorotase, found in Bacillus cereus (strain B4264).